The chain runs to 475 residues: Maintenance of mitochondrial morphology protein 1 (475 aa).

At 1-14 (MSETFSPNLTFTEG) the chain is on the lumenal side. Residues 15-35 (FVLGQASFLIILLLFIRYVVF) traverse the membrane as a helical segment. The Cytoplasmic portion of the chain corresponds to 36-475 (SPSEQIDHEG…VTPGQVGTSR (440 aa)). The SMP-LTD domain occupies 80-278 (PAESSDWVNV…HPNHISLALP (199 aa)). 2 disordered regions span residues 321–381 (NPVE…GQPQ) and 394–475 (SYPH…GTSR). Pro residues predominate over residues 341 to 351 (PPTPLVQPPGT). Composition is skewed to polar residues over residues 353–380 (PTLS…QGQP) and 394–403 (SYPHYNTYTL). Over residues 442-464 (STTSSLTPSQSQSQFRFRGQFAS) the composition is skewed to low complexity.

The protein belongs to the MMM1 family. As to quaternary structure, homodimer. Component of the ER-mitochondria encounter structure (ERMES) or MDM complex, composed of MMM1, MDM10, MDM12 and MDM34. An MMM1 homodimer associates with one molecule of MDM12 on each side in a pairwise head-to-tail manner, and the SMP-LTD domains of MMM1 and MDM12 generate a continuous hydrophobic tunnel for phospholipid trafficking.

It localises to the endoplasmic reticulum membrane. Functionally, component of the ERMES/MDM complex, which serves as a molecular tether to connect the endoplasmic reticulum (ER) and mitochondria. Components of this complex are involved in the control of mitochondrial shape and protein biogenesis, and function in nonvesicular lipid trafficking between the ER and mitochondria. The MDM12-MMM1 subcomplex functions in the major beta-barrel assembly pathway that is responsible for biogenesis of all outer membrane beta-barrel proteins, and acts in a late step after the SAM complex. The MDM10-MDM12-MMM1 subcomplex further acts in the TOM40-specific pathway after the action of the MDM12-MMM1 complex. Essential for establishing and maintaining the structure of mitochondria and maintenance of mtDNA nucleoids. The chain is Maintenance of mitochondrial morphology protein 1 from Cryptococcus neoformans var. neoformans serotype D (strain B-3501A) (Filobasidiella neoformans).